Consider the following 263-residue polypeptide: Tryptophan 2,3-dioxygenase (263 aa).

Substrate is bound by residues 32-36 (FIIVH), Y94, and R98. H221 contributes to the heme binding site. T235 contacts substrate.

The protein belongs to the tryptophan 2,3-dioxygenase family. Homotetramer. Heme is required as a cofactor.

It catalyses the reaction L-tryptophan + O2 = N-formyl-L-kynurenine. Its pathway is amino-acid degradation; L-tryptophan degradation via kynurenine pathway; L-kynurenine from L-tryptophan: step 1/2. In terms of biological role, heme-dependent dioxygenase that catalyzes the oxidative cleavage of the L-tryptophan (L-Trp) pyrrole ring and converts L-tryptophan to N-formyl-L-kynurenine. Catalyzes the oxidative cleavage of the indole moiety. This Erythrobacter litoralis (strain HTCC2594) protein is Tryptophan 2,3-dioxygenase.